The sequence spans 981 residues: Anoctamin-3 (981 aa).

Over residues methionine 1–alanine 28 the composition is skewed to polar residues. Disordered stretches follow at residues methionine 1–proline 32 and proline 67–arginine 87. Residues methionine 1–threonine 403 lie on the Cytoplasmic side of the membrane. The span at aspartate 76–arginine 87 shows a compositional bias: basic and acidic residues. A helical transmembrane segment spans residues glycine 404–methionine 424. N-linked (GlcNAc...) asparagine glycans are attached at residues asparagine 425, asparagine 448, and asparagine 455. The Extracellular segment spans residues asparagine 425–asparagine 469. A helical transmembrane segment spans residues glycine 470–tryptophan 490. Topologically, residues lysine 491–serine 550 are cytoplasmic. The helical transmembrane segment at valine 551–tyrosine 571 threads the bilayer. Residues arginine 572–glutamine 592 lie on the Extracellular side of the membrane. A helical transmembrane segment spans residues phenylalanine 593–alanine 613. The Cytoplasmic portion of the chain corresponds to tyrosine 614 to lysine 640. The chain crosses the membrane as a helical span at residues methionine 641–glycine 661. Over arginine 662–glutamine 761 the chain is Extracellular. The helical transmembrane segment at phenylalanine 762 to asparagine 782 threads the bilayer. The Cytoplasmic segment spans residues asparagine 783–glycine 810. The helical transmembrane segment at isoleucine 811 to isoleucine 831 threads the bilayer. Residues alanine 832–leucine 914 lie on the Extracellular side of the membrane. Asparagine 866 carries an N-linked (GlcNAc...) asparagine glycan. The chain crosses the membrane as a helical span at residues alanine 915–isoleucine 935. The Cytoplasmic portion of the chain corresponds to proline 936–proline 981.

Belongs to the anoctamin family. As to quaternary structure, interacts with KCNT1/Slack. In terms of tissue distribution, predominantly expressed in neuronal tissues. Expressed in brain.

It is found in the cell membrane. The enzyme catalyses a 1,2-diacyl-sn-glycero-3-phosphocholine(in) = a 1,2-diacyl-sn-glycero-3-phosphocholine(out). It catalyses the reaction a beta-D-galactosyl-(1&lt;-&gt;1')-N-acylsphing-4-enine(out) = a beta-D-galactosyl-(1&lt;-&gt;1')-N-acylsphing-4-enine(in). Has calcium-dependent phospholipid scramblase activity; scrambles phosphatidylcholine and galactosylceramide. Does not exhibit calcium-activated chloride channel (CaCC) activity. Seems to act as potassium channel regulator and may inhibit pain signaling; can facilitate KCNT1/Slack channel activity by promoting its full single-channel conductance at very low sodium concentrations and by increasing its sodium sensitivity. This chain is Anoctamin-3, found in Mus musculus (Mouse).